Consider the following 145-residue polypeptide: UPF0201 protein M164_1168 (145 aa).

It belongs to the UPF0201 family.

In Saccharolobus islandicus (strain M.16.4 / Kamchatka #3) (Sulfolobus islandicus), this protein is UPF0201 protein M164_1168.